The chain runs to 1372 residues: Collagen alpha-2(I) chain (1372 aa).

The signal sequence occupies residues 1-22 (MLSFVDTRTLLLLAVTSCLATC). Q23 carries the post-translational modification Pyrrolidone carboxylic acid. Residues 23-85 (QYLQSGSVRK…PPGLTGNFAA (63 aa)) constitute a propeptide, N-terminal propeptide. A disordered region spans residues 28–1135 (GSVRKGPTGD…DQPRSQPSLR (1108 aa)). Positions 59-77 (MGPPGPPGSPGPPGSPAPP) are enriched in pro residues. At K90 the chain carries Allysine. The segment covering 95–146 (GPGPMGLMGPRGPPGAVGAPGPQGFQGPAGEPGEPGQTGPAGPRGPAGSPGK) has biased composition (low complexity). The segment covering 147–161 (AGEDGHPGKPGRPGE) has biased composition (basic and acidic residues). K183 carries the 5-hydroxylysine; alternate modification. The O-linked (Gal...) hydroxylysine; alternate glycan is linked to K183. Composition is skewed to low complexity over residues 231-260 (VGAP…SAGP), 285-299 (AGPR…LSGP), 306-327 (PGTN…AGAP), 336-351 (PGPA…RGLV), 390-416 (PGEA…LPGA), 476-495 (LPGI…RGEA), and 519-537 (PGLA…NGAQ). The segment covering 544–553 (GVQGGKGEQG) has biased composition (gly residues). Residues 600 to 639 (PGESGAAGPSGPIGSRGPSGAPGPDGNKGEAGAVGAPGSA) are compositionally biased toward low complexity. A compositionally biased stretch (gly residues) spans 640 to 649 (GASGPGGLPG). 2 stretches are compositionally biased toward low complexity: residues 681 to 716 (RGIP…PRGS) and 725 to 743 (PAGP…QPGA). Basic and acidic residues predominate over residues 744 to 753 (KGEKGTKGPK). Positions 755–771 (ENGIVGPTGSVGAAGPS) are enriched in low complexity. Positions 781–790 (GSRGDGGPPG) are enriched in gly residues. Low complexity-rich tracts occupy residues 792 to 801 (TGFPGAAGRT), 855 to 882 (SGEP…LGLP), 905 to 927 (ISGP…NGAP), 957 to 978 (PGSI…VGPA), and 987 to 1007 (PGPA…PSGP). Positions 1011 to 1022 (RGDKGEPGDKGH) are enriched in basic and acidic residues. Pro residues predominate over residues 1095 to 1107 (AGPPGPPGPPGPP). Positions 1126–1372 (DQPRSQPSLR…RVEVGPVCFK (247 aa)) are cleaved as a propeptide — C-terminal propeptide. The region spanning 1139–1372 (YEVDATLKSL…RVEVGPVCFK (234 aa)) is the Fibrillar collagen NC1 domain. 3 disulfides stabilise this stretch: C1169/C1201, C1209/C1370, and C1278/C1323. Positions 1187, 1189, 1190, 1192, and 1195 each coordinate Ca(2+). An N-linked (GlcNAc...) asparagine glycan is attached at N1273.

Belongs to the fibrillar collagen family. Trimers of one alpha 2(I) and two alpha 1(I) chains. Interacts (via C-terminus) with TMEM131 (via PapD-L domain); the interaction is direct and is involved in assembly and TRAPPIII ER-to-Golgi transport complex-dependent secretion of collagen. Post-translationally, prolines at the third position of the tripeptide repeating unit (G-X-Y) are hydroxylated in some or all of the chains. In terms of tissue distribution, expressed in kidney glomeruli.

It localises to the secreted. The protein localises to the extracellular space. Its subcellular location is the extracellular matrix. In terms of biological role, type I collagen is a member of group I collagen (fibrillar forming collagen). The chain is Collagen alpha-2(I) chain (Col1a2) from Mus musculus (Mouse).